Here is a 180-residue protein sequence, read N- to C-terminus: Large ribosomal subunit protein uL6 (180 aa).

Belongs to the universal ribosomal protein uL6 family. As to quaternary structure, part of the 50S ribosomal subunit.

This protein binds to the 23S rRNA, and is important in its secondary structure. It is located near the subunit interface in the base of the L7/L12 stalk, and near the tRNA binding site of the peptidyltransferase center. The chain is Large ribosomal subunit protein uL6 from Prosthecochloris aestuarii (strain DSM 271 / SK 413).